Reading from the N-terminus, the 644-residue chain is Macrolide export ATP-binding/permease protein MacB (644 aa).

Residues 7-245 (IELQDITRSF…IPETDQNGRR (239 aa)) form the ABC transporter domain. Position 43-50 (43-50 (GPSGSGKS)) interacts with ATP. Helical transmembrane passes span 271–291 (ALTL…LAIG), 526–546 (IAAI…LVSV), 570–590 (FLTE…VIGI), and 607–627 (LLPM…FGFL).

It belongs to the ABC transporter superfamily. Macrolide exporter (TC 3.A.1.122) family. In terms of assembly, homodimer. Part of the tripartite efflux system MacAB-TolC, which is composed of an inner membrane transporter, MacB, a periplasmic membrane fusion protein, MacA, and an outer membrane component, TolC. The complex forms a large protein conduit and can translocate molecules across both the inner and outer membranes. Interacts with MacA.

It is found in the cell inner membrane. Part of the tripartite efflux system MacAB-TolC. MacB is a non-canonical ABC transporter that contains transmembrane domains (TMD), which form a pore in the inner membrane, and an ATP-binding domain (NBD), which is responsible for energy generation. Confers resistance against macrolides. This Marinobacter nauticus (strain ATCC 700491 / DSM 11845 / VT8) (Marinobacter aquaeolei) protein is Macrolide export ATP-binding/permease protein MacB.